The sequence spans 409 residues: Tyrosine--tRNA ligase (409 aa).

A 'HIGH' region motif is present at residues 43 to 52; that stretch reads PTAPDLHLGH. Residues 227–231 carry the 'KMSKS' region motif; the sequence is KMSKS. Position 230 (K230) interacts with ATP. In terms of domain architecture, S4 RNA-binding spans 338-399; the sequence is LALPQLLKLA…GKRKFAKVTL (62 aa).

This sequence belongs to the class-I aminoacyl-tRNA synthetase family. TyrS type 2 subfamily. In terms of assembly, homodimer.

The protein resides in the cytoplasm. It catalyses the reaction tRNA(Tyr) + L-tyrosine + ATP = L-tyrosyl-tRNA(Tyr) + AMP + diphosphate + H(+). In terms of biological role, catalyzes the attachment of tyrosine to tRNA(Tyr) in a two-step reaction: tyrosine is first activated by ATP to form Tyr-AMP and then transferred to the acceptor end of tRNA(Tyr). This chain is Tyrosine--tRNA ligase, found in Nitrosomonas europaea (strain ATCC 19718 / CIP 103999 / KCTC 2705 / NBRC 14298).